Reading from the N-terminus, the 514-residue chain is Pantothenate transporter liz1 (514 aa).

The next 12 helical transmembrane spans lie at 24–44 (LLIK…FINY), 72–92 (INVV…YALQ), 98–118 (LWFS…FAVH), 128–148 (FFMA…LGAW), 159–179 (GIFS…QTAV), 194–214 (WLFI…LFLF), 263–283 (GLCI…NVLM), 300–320 (NYPT…SVIS), 329–349 (WPFG…LLAW), 357–377 (FFAY…FSWA), 390–410 (VVVF…APIM), and 423–443 (LIGL…VSYM).

This sequence belongs to the major facilitator superfamily. Allantoate permease family.

The protein resides in the cell membrane. Its function is as follows. Transports pantothenate into the cell. The sequence is that of Pantothenate transporter liz1 (liz1) from Schizosaccharomyces pombe (strain 972 / ATCC 24843) (Fission yeast).